The chain runs to 149 residues: D-aminoacyl-tRNA deacylase (149 aa).

The Gly-cisPro motif, important for rejection of L-amino acids signature appears at 137–138 (GP).

Belongs to the DTD family. In terms of assembly, homodimer.

It localises to the cytoplasm. It carries out the reaction glycyl-tRNA(Ala) + H2O = tRNA(Ala) + glycine + H(+). It catalyses the reaction a D-aminoacyl-tRNA + H2O = a tRNA + a D-alpha-amino acid + H(+). An aminoacyl-tRNA editing enzyme that deacylates mischarged D-aminoacyl-tRNAs. Also deacylates mischarged glycyl-tRNA(Ala), protecting cells against glycine mischarging by AlaRS. Acts via tRNA-based rather than protein-based catalysis; rejects L-amino acids rather than detecting D-amino acids in the active site. By recycling D-aminoacyl-tRNA to D-amino acids and free tRNA molecules, this enzyme counteracts the toxicity associated with the formation of D-aminoacyl-tRNA entities in vivo and helps enforce protein L-homochirality. The protein is D-aminoacyl-tRNA deacylase of Thermoanaerobacter pseudethanolicus (strain ATCC 33223 / 39E) (Clostridium thermohydrosulfuricum).